The following is a 520-amino-acid chain: MATMAAIGSLKVPSSSSNHTRRLSSSSQRKTLSFSSSSLTGEKLNPTQEIIISNLPRGNERRTPSIVSPKAVSDSQNSQTCLDPDASRSVLGIILGGGAGTRLYPLTKKRAKPAVPLGANYRLIDIPVSNCLNSNISKIYVLTQFNSASLNRHLSRAYASNMGGYKNEGFVEVLAAQQSPENPNWFQGTADAVRQYLWLFEEHNVLEFLVLAGDHLYRMDYEKFIQAHRETDADITVAALPMDEKRATAFGLMKIDDEGRIIEFAEKPKGEQLKAMKVDTTILGLDDERAKEMPFIASMGIYVVSKNVMLDLLRDQFPGANDFGSEVIPGATDLGLRVQAYLYDGYWEDIGTIEAFYNANLGITKKPVPDFSFYDRSAPIYTQPRYLPPSKMLDADVTDSVIGEGCVIKNCKIHHSVIGLRSCISEGAIIEDTLLMGADYYETDADRTLLAAKGSIPIGIGRDSHIKRAIIDKNARIGDNVKIINTDNVQEAARETDGYFIKSGIVTVIKDALIPSGTVI.

The transit peptide at 1-71 (MATMAAIGSL…RTPSIVSPKA (71 aa)) directs the protein to the chloroplast. Residues 1–81 (MATMAAIGSL…VSDSQNSQTC (81 aa)) form a disordered region. A compositionally biased stretch (low complexity) spans 14–27 (SSSSNHTRRLSSSS). The span at 28 to 51 (QRKTLSFSSSSLTGEKLNPTQEII) shows a compositional bias: polar residues.

This sequence belongs to the bacterial/plant glucose-1-phosphate adenylyltransferase family. As to quaternary structure, heterotetramer. As to expression, leaves.

It localises to the plastid. The protein localises to the chloroplast. It carries out the reaction alpha-D-glucose 1-phosphate + ATP + H(+) = ADP-alpha-D-glucose + diphosphate. It functions in the pathway glycan biosynthesis; starch biosynthesis. With respect to regulation, activated by 3'phosphoglycerate, inhibited by orthophosphate. Allosteric regulation. Functionally, this protein plays a role in synthesis of starch. It catalyzes the synthesis of the activated glycosyl donor, ADP-glucose from Glc-1-P and ATP. The chain is Glucose-1-phosphate adenylyltransferase small subunit, chloroplastic (AGPS1) from Brassica napus (Rape).